The following is a 450-amino-acid chain: Keratin, type I cytoskeletal 25 (450 aa).

Positions 1 to 11 (MSLRLSSASRR) are enriched in low complexity. Residues 1–20 (MSLRLSSASRRSCPRPTTGS) form a disordered region. The interval 1-78 (MSLRLSSASR…VNERGLLSGN (78 aa)) is head. The segment at 79-114 (EKVTMQNLNDRLASYLDSVHALEEANADLEQKIKGW) is coil 1A. The IF rod domain occupies 79–394 (EKVTMQNLND…LLIGGDDGAC (316 aa)). The segment at 115–136 (YEKFGPGSCRGLDHDYSRYFPI) is linker 1. Positions 137–228 (IDDLKNQIIA…KNHKEEMQVL (92 aa)) are coil 1B. A linker 12 region spans residues 229-251 (QCAAGGNVNVEMNAAPGVDLTVL). The coil 2 stretch occupies residues 252-390 (LNNMRAEYEA…ETYCLLIGGD (139 aa)). The tract at residues 391–450 (DGACKSGGYKSKDYGSGNVGSQVKDPAKAIVVKKVLEEVDQRSKILTTRLHSLEEKSQSN) is tail. A Phosphoserine modification is found at serine 442.

It belongs to the intermediate filament family. In terms of assembly, heterodimer of a type I and a type II keratin. Heterodimer with type II keratin KRT5 leading to the formation of keratin intermediate filament (KIF) network. Interacts with KRT6A to form filaments. Strongly expressed in skin and scalp, and weak expression observed in thymus and tongue. In the hair follicle, expressed in Henle layer, Huxley layer and in the inner root sheath cuticle of the hair follicle. Expression extends from the bulb region up to the point of differentiation into the three layers. Also present in the medulla of beard hair (at protein level).

It is found in the cytoplasm. Its function is as follows. Essential for the proper assembly of type I and type II keratin protein complexes and formation of keratin intermediate filaments in the inner root sheath (irs). Plays a role in the cytoskeleton organization. This is Keratin, type I cytoskeletal 25 from Homo sapiens (Human).